We begin with the raw amino-acid sequence, 171 residues long: MEPSPALAWLLLLSLVADCLKAAQSRDFTVKDIIYLHPSTTPYPGGFKCFTCEKAADNYECNRWAPDIYCPRDTRYCYTQHTMEVTGNSISVTKRCVPLEECLSTGCRDSEHEGYKICTSCCEGNICNLPLPRNDTDATFATTSPINQTNGHPHCVSVIVSCLWVWLGLTL.

Residues 1–25 (MEPSPALAWLLLLSLVADCLKAAQS) form the signal peptide. One can recognise a UPAR/Ly6 domain in the interval 47–141 (FKCFTCEKAA…PRNDTDATFA (95 aa)). 6 disulfides stabilise this stretch: Cys-49/Cys-77, Cys-52/Cys-61, Cys-70/Cys-96, Cys-102/Cys-121, Cys-107/Cys-118, and Cys-122/Cys-127. The NxI motif signature appears at 88–90 (NSI). Residues Asn-134 and Asn-147 are each glycosylated (N-linked (GlcNAc...) asparagine). Asn-147 is lipidated: GPI-anchor amidated asparagine. The propeptide at 148–171 (QTNGHPHCVSVIVSCLWVWLGLTL) is removed in mature form.

In terms of assembly, interacts with nicotinic acetylcholine receptors (nAChRs) including CHRNA3, CHRNA4, CHRNA5, CHRNA6, CHRNA7, CHRNB2 and CHRNB4. Interacts (via NxI motif) with LRP6. In terms of tissue distribution, expressed at high levels in the cortex and cerebellum of the brain, at moderate levels in the lung, kidney, and liver, and at low levels in the heart and prostate (at protein level). Expressed in neurons (at protein level).

The protein localises to the secreted. It is found in the cytoplasm. Its subcellular location is the cell membrane. It localises to the synapse. The protein resides in the synaptosome. The protein localises to the membrane raft. It is found in the cell projection. Its subcellular location is the dendrite. It localises to the perikaryon. Functionally, acts as a modulator of nicotinic acetylcholine receptors (nAChRs) function in the brain. Inhibits nicotine-induced Ca(2+) influx through nAChRs. In vitro, specifically inhibits alpha-3:beta-4 and alpha-7 nAChR currents in an allosteric manner. Acts as a positive regulator of Wnt/beta-catenin signaling. The chain is Ly6/PLAUR domain-containing protein 6 (Lypd6) from Rattus norvegicus (Rat).